A 433-amino-acid polypeptide reads, in one-letter code: GTPase Obg (433 aa).

The Obg domain maps to 4–162 (EDFVDRVTIF…RWLELELKLL (159 aa)). Residues 163 to 334 (ADAGLIGFPN…LKQKIFEIVG (172 aa)) enclose the OBG-type G domain. GTP-binding positions include 169 to 176 (GFPNVGKS), 194 to 198 (FTTLV), 216 to 219 (DIPG), 286 to 289 (NKID), and 315 to 317 (SAL). Mg(2+) is bound by residues S176 and T196. Residues 356-433 (TKIEERFDFE…IGQYSFEYKE (78 aa)) form the OCT domain.

It belongs to the TRAFAC class OBG-HflX-like GTPase superfamily. OBG GTPase family. As to quaternary structure, monomer. Mg(2+) is required as a cofactor.

It localises to the cytoplasm. Its function is as follows. An essential GTPase which binds GTP, GDP and possibly (p)ppGpp with moderate affinity, with high nucleotide exchange rates and a fairly low GTP hydrolysis rate. Plays a role in control of the cell cycle, stress response, ribosome biogenesis and in those bacteria that undergo differentiation, in morphogenesis control. This is GTPase Obg from Pseudothermotoga lettingae (strain ATCC BAA-301 / DSM 14385 / NBRC 107922 / TMO) (Thermotoga lettingae).